We begin with the raw amino-acid sequence, 303 residues long: Recombination-associated protein RdgC (303 aa).

This sequence belongs to the RdgC family.

The protein resides in the cytoplasm. Its subcellular location is the nucleoid. May be involved in recombination. The protein is Recombination-associated protein RdgC of Enterobacter sp. (strain 638).